The sequence spans 262 residues: Tetrahydromethanopterin S-methyltransferase subunit C (262 aa).

A run of 6 helical transmembrane segments spans residues 35 to 57 (FVPS…AGAN), 70 to 92 (GVPS…GVLI), 97 to 119 (GLPV…FIVG), 140 to 162 (LSLM…FSAD), 172 to 194 (GVIA…ACIG), and 214 to 236 (WLIF…FWLY).

This sequence belongs to the MtrC family. In terms of assembly, the complex is composed of 8 subunits; MtrA, MtrB, MtrC, MtrD, MtrE, MtrF, MtrG and MtrH.

It localises to the cell membrane. The enzyme catalyses 5-methyl-5,6,7,8-tetrahydromethanopterin + coenzyme M + 2 Na(+)(in) = 5,6,7,8-tetrahydromethanopterin + methyl-coenzyme M + 2 Na(+)(out). The protein operates within one-carbon metabolism; methanogenesis from CO(2); methyl-coenzyme M from 5,10-methylene-5,6,7,8-tetrahydromethanopterin: step 2/2. Functionally, part of a complex that catalyzes the formation of methyl-coenzyme M and tetrahydromethanopterin from coenzyme M and methyl-tetrahydromethanopterin. This is an energy-conserving, sodium-ion translocating step. The sequence is that of Tetrahydromethanopterin S-methyltransferase subunit C from Methanococcus maripaludis (strain DSM 14266 / JCM 13030 / NBRC 101832 / S2 / LL).